A 109-amino-acid polypeptide reads, in one-letter code: Putative double-stranded DNA mimic protein YciU (109 aa).

Belongs to the putative dsDNA mimic protein family.

Functionally, may act as a double-stranded DNA (dsDNA) mimic. Probably regulates the activity of a dsDNA-binding protein. In Shigella boydii serotype 18 (strain CDC 3083-94 / BS512), this protein is Putative double-stranded DNA mimic protein YciU.